Reading from the N-terminus, the 393-residue chain is Elongation factor Tu (393 aa).

One can recognise a tr-type G domain in the interval 10–202 (KPHVNIGTIG…AVDEYIPTPE (193 aa)). The interval 19–26 (GHVDHGKT) is G1. 19 to 26 (GHVDHGKT) is a binding site for GTP. Mg(2+) is bound at residue Thr26. The tract at residues 60–64 (GITIN) is G2. A G3 region spans residues 81–84 (DCPG). Residues 81–85 (DCPGH) and 136–139 (NKAD) each bind GTP. The G4 stretch occupies residues 136 to 139 (NKAD). Residues 174-176 (SAL) are G5.

This sequence belongs to the TRAFAC class translation factor GTPase superfamily. Classic translation factor GTPase family. EF-Tu/EF-1A subfamily. Monomer.

It is found in the cytoplasm. The enzyme catalyses GTP + H2O = GDP + phosphate + H(+). GTP hydrolase that promotes the GTP-dependent binding of aminoacyl-tRNA to the A-site of ribosomes during protein biosynthesis. This Clostridium novyi (strain NT) protein is Elongation factor Tu.